We begin with the raw amino-acid sequence, 63 residues long: Putative transmembrane protein ORF63 (63 aa).

At 1-8 the chain is on the extracellular side; the sequence is MQSGNFTL. The chain crosses the membrane as a helical span at residues 9–29; it reads EVIMYLINSILAFIMIFFTFV. The Cytoplasmic segment spans residues 30-31; sequence NP. The chain crosses the membrane as a helical span at residues 32 to 52; it reads SLLKCQYWTYILVALITAIIF. At 53–63 the chain is on the extracellular side; it reads HTGSKVGKSSG.

It is found in the host membrane. In Acidianus filamentous virus 1 (isolate United States/Yellowstone) (AFV-1), this protein is Putative transmembrane protein ORF63.